Here is a 185-residue protein sequence, read N- to C-terminus: Large ribosomal subunit protein uL5m (185 aa).

The protein belongs to the universal ribosomal protein uL5 family.

It is found in the mitochondrion. The protein is Large ribosomal subunit protein uL5m (RPL5) of Brassica napus (Rape).